The sequence spans 46 residues: Defensin-like protein AX1 (46 aa).

4 disulfides stabilise this stretch: Cys-3-Cys-46, Cys-14-Cys-34, Cys-20-Cys-40, and Cys-24-Cys-42.

In terms of tissue distribution, leaves and flowers.

In terms of biological role, strong inhibiting activity against C.beticola and other filamentous fungi. Little or no effect against bacteria. The sequence is that of Defensin-like protein AX1 from Beta vulgaris (Sugar beet).